The following is a 105-amino-acid chain: 5-hydroxymethyl-dUMP N-hydrolase (105 aa).

6 residues coordinate 5-hydroxymethyl-dUMP: glycine 6, isoleucine 8, serine 42, glycine 44, glutamate 48, and serine 72.

This sequence belongs to the 2'-deoxynucleoside 5'-phosphate N-hydrolase 1 family. In terms of assembly, monomer and homodimer.

Its subcellular location is the cytoplasm. The protein resides in the nucleus. It catalyses the reaction 5-hydroxymethyl-dUMP + H2O = 5-hydroxymethyluracil + 2-deoxy-D-ribose 5-phosphate. Its function is as follows. Part of a nucleotide salvage pathway that eliminates epigenetically modified 5-hydroxymethyl-dCMP (hmdCMP) in a two-step process entailing deamination to cytotoxic 5-hydroxymethyl-dUMP (hmdUMP), followed by its hydrolysis into 5-hydroxymethyluracil (hmU) and 2-deoxy-D-ribose 5-phosphate (deoxyribosephosphate). Catalyzes the second step in that pathway, the hydrolysis of the N-glycosidic bond in hmdUMP, degrading this cytotoxic nucleotide to avoid its genomic integration. This chain is 5-hydroxymethyl-dUMP N-hydrolase, found in Branchiostoma floridae (Florida lancelet).